The primary structure comprises 427 residues: Steroid C26-monooxygenase (427 aa).

A heme-binding site is contributed by Cys-360.

This sequence belongs to the cytochrome P450 family. Requires heme as cofactor.

It carries out the reaction cholest-4-en-3-one + 6 reduced [2Fe-2S]-[ferredoxin] + 3 O2 + 5 H(+) = (25S)-3-oxocholest-4-en-26-oate + 6 oxidized [2Fe-2S]-[ferredoxin] + 4 H2O. The protein operates within steroid metabolism; cholesterol degradation. Involved in the utilization of cholesterol as the sole carbon and energy source by degrading the side chain. Primarily catalyzes the sequential oxidation of the terminal methyl of cholest-4-en-3-one into (25S)-26-hydroxycholest-4-en-3-one (alcohol), (25S)-26-oxocholest-4-en-3-one (aldehyde), to finally yield the carboxylic acid (25S)-3-oxocholest-4-en-26-oate. Also able to sequentially oxidize cholesterol itself, not only cholest-4-en-3-one. In Mycolicibacterium smegmatis (strain ATCC 700084 / mc(2)155) (Mycobacterium smegmatis), this protein is Steroid C26-monooxygenase.